Consider the following 133-residue polypeptide: Small ribosomal subunit protein uS11 (133 aa).

The protein belongs to the universal ribosomal protein uS11 family. Part of the 30S ribosomal subunit.

In terms of biological role, located on the platform of the 30S subunit. This Hyperthermus butylicus (strain DSM 5456 / JCM 9403 / PLM1-5) protein is Small ribosomal subunit protein uS11.